A 631-amino-acid chain; its full sequence is Chaperone protein HtpG (631 aa).

Residues 1–339 (MSAQKETLGF…SNDLPLNVSR (339 aa)) form an a; substrate-binding region. Residues 340–556 (EILQESKDID…EHDMSAHLER (217 aa)) are b. The c stretch occupies residues 557–631 (MLKAAGQKIE…INKLMLELSV (75 aa)).

The protein belongs to the heat shock protein 90 family. In terms of assembly, homodimer.

The protein resides in the cytoplasm. In terms of biological role, molecular chaperone. Has ATPase activity. This Chromobacterium violaceum (strain ATCC 12472 / DSM 30191 / JCM 1249 / CCUG 213 / NBRC 12614 / NCIMB 9131 / NCTC 9757 / MK) protein is Chaperone protein HtpG.